A 61-amino-acid polypeptide reads, in one-letter code: Alpha-conotoxine-like Am1.3 (61 aa).

Residues 1–21 (MGMRMMFTVFLLVVLATTVVS) form the signal peptide. The propeptide occupies 22 to 44 (FMSGRASHGRNAAASDLIALTIK). A Cysteine amide modification is found at Cys60.

This sequence belongs to the conotoxin A superfamily. Post-translationally, is not hydroxylated. Contains 2 disulfide bonds. Expressed by the venom duct.

Its subcellular location is the secreted. Functionally, alpha-conotoxins act on postsynaptic membranes, they bind to the nicotinic acetylcholine receptors (nAChR) and thus inhibit them. The chain is Alpha-conotoxine-like Am1.3 from Conus amadis (Amadis cone).